We begin with the raw amino-acid sequence, 505 residues long: Cytochrome P450 monooxygenase FGM1 (505 aa).

The N-terminal stretch at 1-23 is a signal peptide; that stretch reads MPLILSITSSGTVLVLLTLLSLA. N-linked (GlcNAc...) asparagine glycosylation is found at N188 and N351. Residue C450 coordinates heme.

It belongs to the cytochrome P450 family. Heme serves as cofactor.

It functions in the pathway secondary metabolite biosynthesis. In terms of biological role, cytochrome P450 monooxygenase; part of the Fg3_54/C64 gene cluster that mediates the biosynthesis of the octapeptide fusaoctaxin A, a virulence factor that is required for cell-to-cell invasiveness of plant host. The 2 nonribosomal peptide synthetases NRPS9 and NRPS5 form an assembly line which likely utilizes GABA as a starter unit (loaded on the unique module M1 of NRPS9) and sequentially incorporates seven extender units composed of the residues L-Ala, L-allo-Ile, L-Ser, L-Val, L-Ser, L-Leu and L-Leu, respectively. During the process, each of the residues that are tethered on modules M3-M7 of NRPS5 containing an E domain can undergo an epimerization reaction to produce a D-configuration before the transpeptidation reaction occurs. The elongation of the peptidyl chain might be terminated by module M8-mediated L-Leu incorporation, followed by R domain-catalyzed 4 electron reduction to release the resulting octapeptide from the assembly line as an alcohol. Fusaoctaxin A is cleaved by the cluster specific ABC transporter FGM5 to the pentapeptide fusapentaxin A and the tripeptide fusatrixin A. The other enzymes from the cluster, FGM1, FGM2, FGM3 and FGM9 seem not to be involved in the biosynthesis of fusaoctaxin A and their functions have still to be determined. The chain is Cytochrome P450 monooxygenase FGM1 from Gibberella zeae (strain ATCC MYA-4620 / CBS 123657 / FGSC 9075 / NRRL 31084 / PH-1) (Wheat head blight fungus).